The sequence spans 819 residues: uncharacterized protein (819 aa).

6 consecutive transmembrane segments (helical) span residues 45 to 65 (CLFYILSFQWIHDFTLLPIVL), 100 to 120 (FLLGFFNSFFLSLPFSVIHIL), 135 to 155 (YTIGGYLIGQLVFLTCVVFGI), 158 to 178 (VLVPWLTLEPFNYLLGIILLF), 252 to 272 (YLLGIAIGSVLFSLFWGWVFL), and 298 to 318 (FVLALALSLTSIPFYSFEYLV).

This sequence belongs to the ycf78 family.

The protein resides in the plastid. Its subcellular location is the chloroplast membrane. This is an uncharacterized protein from Chlorella vulgaris (Green alga).